The chain runs to 488 residues: Proline--tRNA ligase (488 aa).

The protein belongs to the class-II aminoacyl-tRNA synthetase family. ProS type 3 subfamily. As to quaternary structure, homodimer.

It localises to the cytoplasm. It carries out the reaction tRNA(Pro) + L-proline + ATP = L-prolyl-tRNA(Pro) + AMP + diphosphate. Its function is as follows. Catalyzes the attachment of proline to tRNA(Pro) in a two-step reaction: proline is first activated by ATP to form Pro-AMP and then transferred to the acceptor end of tRNA(Pro). The polypeptide is Proline--tRNA ligase (Symbiobacterium thermophilum (strain DSM 24528 / JCM 14929 / IAM 14863 / T)).